A 485-amino-acid polypeptide reads, in one-letter code: Zinc finger protein 639 (485 aa).

The span at 1-14 (MNEYPKKRKRKTLH) shows a compositional bias: basic residues. The segment at 1–20 (MNEYPKKRKRKTLHPSRYSD) is disordered. At Ser-60 the chain carries Phosphoserine. A Glycyl lysine isopeptide (Lys-Gly) (interchain with G-Cter in SUMO2) cross-link involves residue Lys-76. Residue Ser-88 is modified to Phosphoserine. Glycyl lysine isopeptide (Lys-Gly) (interchain with G-Cter in SUMO2) cross-links involve residues Lys-177, Lys-181, and Lys-226. 8 C2H2-type zinc fingers span residues 204–227 (YKCELCEFNSKYFSDLKQHMILKH), 233–255 (NVCRVCKESFSTNMLLIEHAKLH), 260–283 (YICKYCDYKTVIFENLSQHIADTH), 289–311 (YWCEQCDVQFSSSSELYLHFQEH), 374–397 (FVCQVCGFRSRLHTNVNRHVAIEH), 403–425 (HVCDDCGKGFSSMLEYCKHLNSH), 431–454 (YLCQYCEYSTGQIEDLKIHLDFKH), and 460–482 (HKCSDCLMRFGNERELISHLPVH). Residues 371-455 (KNFFVCQVCG…LKIHLDFKHS (85 aa)) are interaction with CTNNA2.

The protein belongs to the krueppel C2H2-type zinc-finger protein family. As to quaternary structure, interacts with CTNNA2.

It localises to the nucleus. In terms of biological role, binds DNA and may function as a transcriptional repressor. This is Zinc finger protein 639 (ZNF639) from Homo sapiens (Human).